The primary structure comprises 156 residues: Myosin regulatory light chain, striated adductor muscle (156 aa).

Blocked amino end (Ala) is present on Ala-1. EF-hand domains are found at residues 15 to 50 (KQIQ…LGRT) and 84 to 119 (DSEE…MGDN). Ca(2+) is bound by residues Asp-28, Asp-30, Asp-32, and Asp-39.

Its function is as follows. In molluscan muscle, calcium regulation is associated with myosin rather than with actin. Muscle myosin contains two types of light chains: the catalytic light chain, essential for ATPase activity, and the regulatory light chain, a calcium-binding protein responsible for Ca(2+) dependent binding and Ca(2+) dependent Mg-ATPase activity. This is Myosin regulatory light chain, striated adductor muscle from Chlamys nipponensis akazara (Akazara scallop).